Consider the following 313-residue polypeptide: ADP-L-glycero-D-manno-heptose-6-epimerase (313 aa).

NADP(+) contacts are provided by residues 10–11, 31–32, arginine 38, lysine 53, 75–79, and asparagine 92; these read FI, DD, and EGACS. Tyrosine 139 serves as the catalytic Proton acceptor. Residue lysine 143 coordinates NADP(+). Asparagine 168 is a substrate binding site. NADP(+)-binding residues include valine 169 and lysine 177. The Proton acceptor role is filled by lysine 177. Residues lysine 179, histidine 186, 200–203, arginine 213, and tyrosine 277 each bind substrate; that span reads FEGW.

This sequence belongs to the NAD(P)-dependent epimerase/dehydratase family. HldD subfamily. In terms of assembly, homopentamer. It depends on NADP(+) as a cofactor.

It carries out the reaction ADP-D-glycero-beta-D-manno-heptose = ADP-L-glycero-beta-D-manno-heptose. The protein operates within nucleotide-sugar biosynthesis; ADP-L-glycero-beta-D-manno-heptose biosynthesis; ADP-L-glycero-beta-D-manno-heptose from D-glycero-beta-D-manno-heptose 7-phosphate: step 4/4. Functionally, catalyzes the interconversion between ADP-D-glycero-beta-D-manno-heptose and ADP-L-glycero-beta-D-manno-heptose via an epimerization at carbon 6 of the heptose. The sequence is that of ADP-L-glycero-D-manno-heptose-6-epimerase from Marinobacter nauticus (strain ATCC 700491 / DSM 11845 / VT8) (Marinobacter aquaeolei).